A 545-amino-acid polypeptide reads, in one-letter code: Carboxypeptidase N subunit 2 (545 aa).

Positions 1–21 (MLPGAWLLWTSLLLLARPAQP) are cleaved as a signal peptide. An LRRNT domain is found at 22–49 (CPMGCDCFVQEVFCSDEELATVPLDIPP). N-linked (GlcNAc...) asparagine glycans are attached at residues Asn-74, Asn-111, and Asn-119. LRR repeat units lie at residues 98–119 (RLED…IFSN), 122–143 (SLGK…LFQH), 146–167 (ALES…LFQP), 170–191 (HLKT…LFHP), 194–215 (SLQT…VFGK), 218–239 (SLQE…VFSQ), 242–263 (CLER…IFAS), 266–287 (NLTF…LFAH), 290–311 (CLVG…TFAH), 314–335 (NLRS…IFRD), 338–359 (ELVK…LFQN), and 362–383 (KLEL…IFDT). Residue Asn-228 is glycosylated (N-linked (GlcNAc...) asparagine). Asn-266 is a glycosylation site (N-linked (GlcNAc...) asparagine). Asn-348 and Asn-359 each carry an N-linked (GlcNAc...) asparagine glycan. The 53-residue stretch at 395 to 447 (NPWQCDCHLAYLFNWLQQYTDRLLNIQTYCAGPAYLKGQVVPALNEKQLVCPV) folds into the LRRCT domain. Asn-518 is a glycosylation site (N-linked (GlcNAc...) asparagine).

In terms of assembly, tetramer of two catalytic chains and two glycosylated inactive chains. Whether or not any Cys residues participate in intrachain bonds is unknown, but they do not form interchain disulfide bonds with the 50 kDa catalytic subunit.

The protein resides in the secreted. Functionally, the 83 kDa subunit binds and stabilizes the catalytic subunit at 37 degrees Celsius and keeps it in circulation. Under some circumstances it may be an allosteric modifier of the catalytic subunit. This is Carboxypeptidase N subunit 2 (CPN2) from Homo sapiens (Human).